The chain runs to 144 residues: MKLHELKPNEGARDVRKRVGRGTSSGTGKTAGRGQKGQKARSKVRLGFEGGQMPLFRRMPKRGFKNINRKEYAVVNLNDLNRFEDGTEITATVLIEAGVVKNELSGVKVLANGELNKKLNIKVSKYSEAAKAAVEAAGGSIEVI.

Residues M1–D14 show a composition bias toward basic and acidic residues. Residues M1 to K43 are disordered. Residues T23–Q35 are compositionally biased toward gly residues.

This sequence belongs to the universal ribosomal protein uL15 family. In terms of assembly, part of the 50S ribosomal subunit.

Functionally, binds to the 23S rRNA. This chain is Large ribosomal subunit protein uL15, found in Latilactobacillus sakei subsp. sakei (strain 23K) (Lactobacillus sakei subsp. sakei).